The sequence spans 516 residues: Glucose-6-phosphate 1-dehydrogenase 5, cytoplasmic (516 aa).

Residues 38 to 45 (GASGDLAK), Arg-73, Tyr-156, and Lys-183 each bind NADP(+). D-glucose 6-phosphate-binding positions include Lys-183, 213 to 217 (HYLGK), Glu-251, and Asp-270. Residue His-275 is the Proton acceptor of the active site. Lys-358 provides a ligand contact to NADP(+). D-glucose 6-phosphate contacts are provided by Lys-361 and Lys-366. Lys-367, Arg-371, and Arg-395 together coordinate NADP(+). Residue Gln-397 coordinates D-glucose 6-phosphate. NADP(+) contacts are provided by residues 403–405 (YMK), 423–425 (DLS), Arg-489, and Trp-511.

The protein belongs to the glucose-6-phosphate dehydrogenase family. Forms homodimer. Expressed in leaves and stems.

Its subcellular location is the cytoplasm. It localises to the cytosol. It catalyses the reaction D-glucose 6-phosphate + NADP(+) = 6-phospho-D-glucono-1,5-lactone + NADPH + H(+). It functions in the pathway carbohydrate degradation; pentose phosphate pathway; D-ribulose 5-phosphate from D-glucose 6-phosphate (oxidative stage): step 1/3. Regulated by metabolites. Its function is as follows. Catalyzes the rate-limiting step of the oxidative pentose-phosphate pathway, which represents a route for the dissimilation of carbohydrates besides glycolysis. The main function of this enzyme is to provide reducing power (NADPH) and pentose phosphates for fatty acid and nucleic acid synthesis which are involved in membrane synthesis and cell division. The sequence is that of Glucose-6-phosphate 1-dehydrogenase 5, cytoplasmic from Arabidopsis thaliana (Mouse-ear cress).